The following is a 553-amino-acid chain: Hydroxylamine reductase (553 aa).

4 residues coordinate [2Fe-2S] cluster: cysteine 3, cysteine 6, cysteine 18, and cysteine 25. Residues histidine 252, glutamate 276, cysteine 320, cysteine 408, cysteine 436, cysteine 461, glutamate 495, and lysine 497 each coordinate hybrid [4Fe-2O-2S] cluster. Cysteine 408 bears the Cysteine persulfide mark.

This sequence belongs to the HCP family. [2Fe-2S] cluster serves as cofactor. Requires hybrid [4Fe-2O-2S] cluster as cofactor.

The protein resides in the cytoplasm. It catalyses the reaction A + NH4(+) + H2O = hydroxylamine + AH2 + H(+). In terms of biological role, catalyzes the reduction of hydroxylamine to form NH(3) and H(2)O. In Tolumonas auensis (strain DSM 9187 / NBRC 110442 / TA 4), this protein is Hydroxylamine reductase.